The following is a 97-amino-acid chain: Peptide Y (97 aa).

Residues 1-28 form the signal peptide; it reads MANMLRSWMMLAALAVCLLVCLSSFADA. A Tyrosine amide modification is found at tyrosine 64. Positions 68-97 are cleaved as a propeptide — C-terminal extension; it reads STPEQAVAWLLFGADSSQDAEPRLDYSDQW.

The protein belongs to the NPY family.

The protein localises to the secreted. This Dicentrarchus labrax (European seabass) protein is Peptide Y.